Consider the following 368-residue polypeptide: H-2 class I histocompatibility antigen, K-D alpha chain (368 aa).

The first 21 residues, 1–21, serve as a signal peptide directing secretion; sequence MAPCTLLLLLAAALAPTQTRA. Residues 22–111 are alpha-1; the sequence is GPHSLRYFVT…AQRYYNQSKG (90 aa). At 22–305 the chain is on the extracellular side; it reads GPHSLRYFVT…KLPPSTVSNT (284 aa). N107 carries N-linked (GlcNAc...) asparagine glycosylation. Positions 112–203 are alpha-2; that stretch reads GSHTFQRMFG…ELGNETLLRT (92 aa). The cysteines at positions 122 and 185 are disulfide-linked. N-linked (GlcNAc...) asparagine glycosylation is found at N197 and N277. The tract at residues 204–295 is alpha-3; the sequence is DSPKAHVTYH…GLPEPLTLRW (92 aa). The Ig-like C1-type domain maps to 206–294; sequence PKAHVTYHPR…KGLPEPLTLR (89 aa). C224 and C280 are joined by a disulfide. A connecting peptide region spans residues 296-305; sequence KLPPSTVSNT. The helical transmembrane segment at 306–328 threads the bilayer; sequence VIIAVLVVLGAAIVTGAVVAFVM. Over 329–368 the chain is Cytoplasmic; the sequence is KMRRNTGGKGVNYALAPGSQTSDLSLPDGKVMVHDPHSLA. Phosphoserine occurs at positions 350 and 353.

It belongs to the MHC class I family. Heterodimer of an alpha chain and a beta chain (beta-2-microglobulin).

The protein resides in the membrane. Involved in the presentation of foreign antigens to the immune system. This chain is H-2 class I histocompatibility antigen, K-D alpha chain (H2-K1), found in Mus musculus (Mouse).